The following is a 332-amino-acid chain: HPr kinase/phosphorylase (332 aa).

Residues His153 and Lys174 contribute to the active site. 168–175 (GKSGLGKS) lines the ATP pocket. Position 175 (Ser175) interacts with Mg(2+). The Proton acceptor; for phosphorylation activity. Proton donor; for dephosphorylation activity role is filled by Asp192. The interval 217–226 (MEIRGLGVVD) is important for the catalytic mechanism of both phosphorylation and dephosphorylation. Glu218 is a binding site for Mg(2+). The active site involves Arg259. Positions 280–285 (PIFPGK) are important for the catalytic mechanism of dephosphorylation.

Belongs to the HPrK/P family. Homohexamer. Mg(2+) serves as cofactor.

The catalysed reaction is [HPr protein]-L-serine + ATP = [HPr protein]-O-phospho-L-serine + ADP + H(+). The enzyme catalyses [HPr protein]-O-phospho-L-serine + phosphate + H(+) = [HPr protein]-L-serine + diphosphate. Its function is as follows. Catalyzes the ATP- as well as the pyrophosphate-dependent phosphorylation of a specific serine residue in HPr, a phosphocarrier protein of the phosphoenolpyruvate-dependent sugar phosphotransferase system (PTS). HprK/P also catalyzes the pyrophosphate-producing, inorganic phosphate-dependent dephosphorylation (phosphorolysis) of seryl-phosphorylated HPr (P-Ser-HPr). This is HPr kinase/phosphorylase from Chlorobium phaeovibrioides (strain DSM 265 / 1930) (Prosthecochloris vibrioformis (strain DSM 265)).